The primary structure comprises 641 residues: SUMO-activating enzyme subunit 2-B (641 aa).

ATP contacts are provided by residues 24 to 29, Asp48, 56 to 59, Lys72, 95 to 96, and 117 to 122; these read GAGGIG, NLNR, SI, and DNNAAR. Residues Cys158 and Cys161 each coordinate Zn(2+). Cys173 serves as the catalytic Glycyl thioester intermediate. Zn(2+)-binding residues include Cys439 and Cys442. The segment at 546-641 is disordered; the sequence is GDVPEKGPQK…EEDDDIIALD (96 aa). Over residues 548-561 the composition is skewed to basic and acidic residues; that stretch reads VPEKGPQKPPEESV. The span at 562-579 shows a compositional bias: polar residues; it reads KNITNGSDDGAQPSTSKA. 2 stretches are compositionally biased toward acidic residues: residues 582–594 and 630–641; these read QDDV…DEES and PVEEDDDIIALD.

Belongs to the ubiquitin-activating E1 family. As to quaternary structure, heterodimer of sae1 and uba2/sae2. The heterodimer corresponds to the two domains that are encoded on a single polypeptide chain in ubiquitin-activating enzyme E1. Interacts with ube2i.

Its subcellular location is the nucleus. It functions in the pathway protein modification; protein sumoylation. Its function is as follows. The heterodimer acts as an E1 ligase for sumo1, sumo2, and sumo3. It mediates ATP-dependent activation of sumo proteins followed by formation of a thioester bond between a sumo protein and a conserved active site cysteine residue on uba2/sae2. This chain is SUMO-activating enzyme subunit 2-B (uba2-b), found in Xenopus laevis (African clawed frog).